The sequence spans 447 residues: Putative branched-chain amino acid carrier protein SSP1343 (447 aa).

A run of 12 helical transmembrane segments spans residues 6–26 (WIIG…IFPP), 40–60 (ILAF…VGAL), 74–94 (PKFS…LFAI), 116–136 (LALF…CINP), 143–163 (IGSL…VKGF), 192–212 (GYLT…VNAV), 228–248 (LMAG…LGYI), 289–309 (LLGI…VVAV), 324–344 (IYVI…LNSV), 349–369 (VPVL…ILLA), 381–401 (IPVA…QGWI), and 416–436 (LEWF…AAMV).

It belongs to the branched chain amino acid transporter family.

It is found in the cell membrane. In terms of biological role, component of the transport system for branched-chain amino acids (leucine, isoleucine and valine), which is coupled to a proton motive force. The protein is Putative branched-chain amino acid carrier protein SSP1343 of Staphylococcus saprophyticus subsp. saprophyticus (strain ATCC 15305 / DSM 20229 / NCIMB 8711 / NCTC 7292 / S-41).